The following is a 329-amino-acid chain: MTVTIYDVAREARVSMATVSRVVNGNQNVKAETKNKVNEVIKRLNYRPNAVARGLASKKTTTVGVIIPDISNIYYSQLARGLEDIATMYKYHSIISNSDNDPEKEKEIFNNLLSKQVDGIIFLGGTITEEMKELINQSSVPVVVSGTNGKDAHIASVNIDFTEAAKEITGELIEKGAKSFALVGGEHSKKAQEDVLEGLTEVLNKNGLQLGDTLNCSGAESYKEGVKAFAKMKGNLPDAILCISDEEAIGIMHSAMDAGIKVPEELQIISFNNTRLVEMVRPQLSSVIQPLYDIGAVGMRLLTKYMNDEKIEEPNVVLPHRIEYRGTTK.

The HTH lacI-type domain occupies 1-57 (MTVTIYDVAREARVSMATVSRVVNGNQNVKAETKNKVNEVIKRLNYRPNAVARGLAS). Residues 5-24 (IYDVAREARVSMATVSRVVN) constitute a DNA-binding region (H-T-H motif).

In terms of biological role, global transcriptional regulator of carbon catabolite repression (CCR) and carbon catabolite activation (CCA), which ensures optimal energy usage under diverse conditions. In Staphylococcus aureus (strain COL), this protein is Catabolite control protein A (ccpA).